The chain runs to 1437 residues: Protein CC2D2B (1437 aa).

The sequence is that of Protein CC2D2B from Homo sapiens (Human).